The sequence spans 415 residues: MIKMFIISKNHLDIIYNFVDWEFKNISSIGNIINDEVVWNELPKGVEGVLCGVDGSRGKVEFCSGIVYGLSSYAIGKNIEKGMFELGVLPFFKEEDRVRRLMMTLEYRLATLVSKNVDLILLDGTLSGALIMPPLLSGDTNPLTVYPDLAEDLGWKFIKSLDNFWDEVLENLDGNIYDNTLLAIKIFQKFDSTYSEYVEDIREELFAANILNSRLEIACWGVYFEYIELLHSLNRLLEYDCTFIAKNFENSIITEKLKENNINVDILLDATLLNQIFRGRGYTTLKLEDCYNKKRSRRHINKICDVFGDYFKFLEVIRENPFEMIPKTYVRFAESSPILALEVPRTNKKSIEEVISLLIPYSKLGYPRYLKDAHNKAKISKKEFKKQILFMIKYISEKNRDFSLFFQSGREVLGE.

This is an uncharacterized protein from Methanocaldococcus jannaschii (strain ATCC 43067 / DSM 2661 / JAL-1 / JCM 10045 / NBRC 100440) (Methanococcus jannaschii).